The following is a 957-amino-acid chain: Mediator of RNA polymerase II transcription subunit 16 (957 aa).

Residues Y855–R883 are disordered.

It belongs to the Mediator complex subunit 16 family. Component of the Mediator complex.

The protein resides in the nucleus. Functionally, component of the Mediator complex, a coactivator involved in the regulated transcription of nearly all RNA polymerase II-dependent genes. Mediator functions as a bridge to convey information from gene-specific regulatory proteins to the basal RNA polymerase II transcription machinery. Mediator is recruited to promoters by direct interactions with regulatory proteins and serves as a scaffold for the assembly of a functional preinitiation complex with RNA polymerase II and the general transcription factors. The chain is Mediator of RNA polymerase II transcription subunit 16 (sin4) from Aspergillus clavatus (strain ATCC 1007 / CBS 513.65 / DSM 816 / NCTC 3887 / NRRL 1 / QM 1276 / 107).